The following is a 201-amino-acid chain: Small ribosomal subunit protein uS4 (201 aa).

Positions 93-153 constitute an S4 RNA-binding domain; sequence ARLDNVVYRM…EKSKSLEAID (61 aa).

This sequence belongs to the universal ribosomal protein uS4 family. As to quaternary structure, part of the 30S ribosomal subunit. Contacts protein S5. The interaction surface between S4 and S5 is involved in control of translational fidelity.

Functionally, one of the primary rRNA binding proteins, it binds directly to 16S rRNA where it nucleates assembly of the body of the 30S subunit. With S5 and S12 plays an important role in translational accuracy. The chain is Small ribosomal subunit protein uS4 from Flavobacterium psychrophilum (strain ATCC 49511 / DSM 21280 / CIP 103535 / JIP02/86).